The primary structure comprises 395 residues: Lipoyl synthase, mitochondrial (395 aa).

Residues 1-24 constitute a mitochondrion transit peptide; sequence MVKLPSASRIRSLATVPSTATRAF. [4Fe-4S] cluster is bound by residues Cys107, Cys112, Cys118, Cys137, Cys141, Cys144, and Ser357. Positions 122-346 constitute a Radical SAM core domain; sequence GKGNATATIM…KNVAEGMGFL (225 aa).

The protein belongs to the radical SAM superfamily. Lipoyl synthase family. The cofactor is [4Fe-4S] cluster.

It is found in the mitochondrion. The enzyme catalyses [[Fe-S] cluster scaffold protein carrying a second [4Fe-4S](2+) cluster] + N(6)-octanoyl-L-lysyl-[protein] + 2 oxidized [2Fe-2S]-[ferredoxin] + 2 S-adenosyl-L-methionine + 4 H(+) = [[Fe-S] cluster scaffold protein] + N(6)-[(R)-dihydrolipoyl]-L-lysyl-[protein] + 4 Fe(3+) + 2 hydrogen sulfide + 2 5'-deoxyadenosine + 2 L-methionine + 2 reduced [2Fe-2S]-[ferredoxin]. The protein operates within protein modification; protein lipoylation via endogenous pathway; protein N(6)-(lipoyl)lysine from octanoyl-[acyl-carrier-protein]: step 2/2. Catalyzes the radical-mediated insertion of two sulfur atoms into the C-6 and C-8 positions of the octanoyl moiety bound to the lipoyl domains of lipoate-dependent enzymes, thereby converting the octanoylated domains into lipoylated derivatives. The protein is Lipoyl synthase, mitochondrial of Cryptococcus neoformans var. neoformans serotype D (strain B-3501A) (Filobasidiella neoformans).